A 397-amino-acid chain; its full sequence is Acetyl-CoA acetyltransferase, cytosolic (397 aa).

An N-acetylmethionine modification is found at M1. The active-site Acyl-thioester intermediate is C92. An N6-acetyllysine modification is found at K200. The CoA site is built by R223 and S226. 2 positions are modified to N6-acetyllysine: K233 and K235. Residue S252 coordinates CoA. The active-site Proton donor/acceptor is the C383.

It belongs to the thiolase-like superfamily. Thiolase family. Homotetramer.

It localises to the cytoplasm. The protein localises to the cytosol. It catalyses the reaction 2 acetyl-CoA = acetoacetyl-CoA + CoA. It functions in the pathway lipid metabolism; fatty acid metabolism. Its function is as follows. Involved in the biosynthetic pathway of cholesterol. The sequence is that of Acetyl-CoA acetyltransferase, cytosolic (Acat2) from Rattus norvegicus (Rat).